The primary structure comprises 224 residues: Golgi to ER traffic protein 1 (224 aa).

Residues 1–33 lie on the Lumenal side of the membrane; that stretch reads MDEAIIVDAEFVAPVGTTAGEFVPIDRAPAAGL. Residues 34 to 53 traverse the membrane as a helical segment; sequence LLLVAFVVLYAKVISKLGKP. Residues 54–137 lie on the Cytoplasmic side of the membrane; it reads AIQEFLWEII…RFFTIISSAI (84 aa). A coiled-coil region spans residues 102-124; sequence AKLDREYGKLKVEIEDINNLLTA. Residues 138 to 158 form a helical membrane-spanning segment; sequence FLSTTGMKMFLRIKHRKAAIF. At 159–182 the chain is on the lumenal side; that stretch reads WLPKNAFPYPIEYILSFSSAPLGS. The chain crosses the membrane as a helical span at residues 183–199; the sequence is VSVSAWLMICDAAMDLI. The Cytoplasmic segment spans residues 200–224; the sequence is VTIFVALVVGVIGMLRSNKVKPKTA.

It belongs to the WRB/GET1 family. As to quaternary structure, component of the Golgi to ER traffic (GET) complex, which is composed of GET1, GET2 and GET3. Within the complex, GET1 and GET2 form a heterotetramer which is stabilized by phosphatidylinositol binding and which binds to the GET3 homodimer.

The protein localises to the endoplasmic reticulum membrane. It is found in the golgi apparatus membrane. Required for the post-translational delivery of tail-anchored (TA) proteins to the endoplasmic reticulum. Together with GET2, acts as a membrane receptor for soluble GET3, which recognizes and selectively binds the transmembrane domain of TA proteins in the cytosol. The GET complex cooperates with the HDEL receptor ERD2 to mediate the ATP-dependent retrieval of resident ER proteins that contain a C-terminal H-D-E-L retention signal from the Golgi to the ER. This chain is Golgi to ER traffic protein 1, found in Yarrowia lipolytica (strain CLIB 122 / E 150) (Yeast).